A 353-amino-acid polypeptide reads, in one-letter code: Photosystem II D2 protein (353 aa).

At threonine 2 the chain carries N-acetylthreonine. The residue at position 2 (threonine 2) is a Phosphothreonine. The helical transmembrane segment at 41 to 61 (CAYFALGGWFTGTTFVTSWYT) threads the bilayer. Histidine 118 serves as a coordination point for chlorophyll a. A helical transmembrane segment spans residues 125–141 (GFMLRQFELARSVQLRP). Residues glutamine 130 and asparagine 143 each coordinate pheophytin a. A helical transmembrane segment spans residues 153–166 (VFISVFFIYPLGQS). Histidine 198 provides a ligand contact to chlorophyll a. A helical membrane pass occupies residues 208–228 (AALLCAIHGATVENTLFEDGD). 2 residues coordinate a plastoquinone: histidine 215 and phenylalanine 262. Residue histidine 215 coordinates Fe cation. Histidine 269 lines the Fe cation pocket. A helical transmembrane segment spans residues 279–295 (GLWMSALGVVGLALNLR).

Belongs to the reaction center PufL/M/PsbA/D family. PSII is composed of 1 copy each of membrane proteins PsbA, PsbB, PsbC, PsbD, PsbE, PsbF, PsbH, PsbI, PsbJ, PsbK, PsbL, PsbM, PsbT, PsbX, PsbY, PsbZ, Psb30/Ycf12, at least 3 peripheral proteins of the oxygen-evolving complex and a large number of cofactors. It forms dimeric complexes. It depends on The D1/D2 heterodimer binds P680, chlorophylls that are the primary electron donor of PSII, and subsequent electron acceptors. It shares a non-heme iron and each subunit binds pheophytin, quinone, additional chlorophylls, carotenoids and lipids. There is also a Cl(-1) ion associated with D1 and D2, which is required for oxygen evolution. The PSII complex binds additional chlorophylls, carotenoids and specific lipids. as a cofactor.

It localises to the plastid membrane. It carries out the reaction 2 a plastoquinone + 4 hnu + 2 H2O = 2 a plastoquinol + O2. In terms of biological role, photosystem II (PSII) is a light-driven water:plastoquinone oxidoreductase that uses light energy to abstract electrons from H(2)O, generating O(2) and a proton gradient subsequently used for ATP formation. It consists of a core antenna complex that captures photons, and an electron transfer chain that converts photonic excitation into a charge separation. The D1/D2 (PsbA/PsbD) reaction center heterodimer binds P680, the primary electron donor of PSII as well as several subsequent electron acceptors. D2 is needed for assembly of a stable PSII complex. In Cuscuta reflexa (Southern Asian dodder), this protein is Photosystem II D2 protein.